The chain runs to 255 residues: MRHALITAGSKGLGRKVTETLLAKGYSVTVNYRQDEEAVSRLKEACPDCLDRLQFVKGDVTKKEDLLRIAEAALNRFGRIDFLINNAGPYIFERKKLADYTDDEWYGMLEGNLSAVFHLFKAVIPIMRKQQFGRIITYGFQGAAHAPGWLHRSAFGAAKVGLASLTKTIAIEEAEFGITANMVCPGDIVGDMKEASIEEARMRIGKEKTPIGRSGTGEDIARIIAFLCEENSDLVTGTVIEATGGLNVINKNQTT.

7 to 14 contacts NAD(+); the sequence is TAGSKGLG.

This sequence belongs to the short-chain dehydrogenases/reductases (SDR) family.

In Bacillus subtilis (strain 168), this protein is Putative oxidoreductase YtkK (ytkK).